Reading from the N-terminus, the 840-residue chain is UPF0508 protein SCY_2952 (840 aa).

The protein belongs to the UPF0508 family.

In Saccharomyces cerevisiae (strain YJM789) (Baker's yeast), this protein is UPF0508 protein SCY_2952.